A 150-amino-acid chain; its full sequence is 3-dehydroquinate dehydratase (150 aa).

Catalysis depends on Tyr-26, which acts as the Proton acceptor. Asn-77, His-83, and Asp-90 together coordinate substrate. The Proton donor role is filled by His-103. Substrate contacts are provided by residues 104–105 (LS) and Arg-114.

The protein belongs to the type-II 3-dehydroquinase family. In terms of assembly, homododecamer.

The enzyme catalyses 3-dehydroquinate = 3-dehydroshikimate + H2O. The protein operates within metabolic intermediate biosynthesis; chorismate biosynthesis; chorismate from D-erythrose 4-phosphate and phosphoenolpyruvate: step 3/7. In terms of biological role, catalyzes a trans-dehydration via an enolate intermediate. The protein is 3-dehydroquinate dehydratase of Erwinia tasmaniensis (strain DSM 17950 / CFBP 7177 / CIP 109463 / NCPPB 4357 / Et1/99).